Reading from the N-terminus, the 365-residue chain is MTAAAESERLRPPRVRAVRIWLTVVAALIAVMVLVGGATRLTESGLSIVEWKPVTGTLPPLTDAQWHAAFEGYKTIPQYRELNAGMTLYEFKTIFWWEWSHRLLGRVIGIAYLLPFLWFLWRGAIGPQWKRALWGIFALGALQGAVGWWMVASGLSQRTEVSQVRLAVHLTLALIIYAAIVWTLRRLADKPPIPAAARLKVTAIALLALTLLQLFLGALVAGLRAGRVFNTWPLIDGALIPSAERLWFEQPWWKNLFDNHLTVQFDHRMMAYALWALAAWHAIDAVRSRAGGAASGALWLFAALSLQAVLGILTVLHATPIGLALAHQAVGIVVLTLAVLQVERLTAPRLKALPRAMPVPVGQPG.

8 helical membrane-spanning segments follow: residues 17–37, 107–127, 132–152, 164–184, 203–223, 264–283, 296–316, and 320–340; these read AVRIWLTVVAALIAVMVLVGG, VIGIAYLLPFLWFLWRGAIGP, ALWGIFALGALQGAVGWWMVA, VRLAVHLTLALIIYAAIVWTL, AIALLALTLLQLFLGALVAGL, QFDHRMMAYALWALAAWHAI, GALWLFAALSLQAVLGILTVL, and PIGLALAHQAVGIVVLTLAVL. A heme-binding site is contributed by histidine 267. Histidine 327 provides a ligand contact to heme.

It belongs to the COX15/CtaA family. Type 2 subfamily. In terms of assembly, interacts with CtaB. Requires heme b as cofactor.

Its subcellular location is the cell membrane. It carries out the reaction Fe(II)-heme o + 2 A + H2O = Fe(II)-heme a + 2 AH2. Its pathway is porphyrin-containing compound metabolism; heme A biosynthesis; heme A from heme O: step 1/1. In terms of biological role, catalyzes the conversion of heme O to heme A by two successive hydroxylations of the methyl group at C8. The first hydroxylation forms heme I, the second hydroxylation results in an unstable dihydroxymethyl group, which spontaneously dehydrates, resulting in the formyl group of heme A. This is Heme A synthase from Rhodopseudomonas palustris (strain HaA2).